A 231-amino-acid chain; its full sequence is Modulator of macroautophagy TMEM150B-B (231 aa).

M1 is a topological domain (cytoplasmic). A helical transmembrane segment spans residues 2–22; it reads WAWALLPICLTVWATGGIWIV. Residues 23–50 lie on the Extracellular side of the membrane; sequence YAMSVSNGSVNLSDGFPYISVSGTYPPQ. 2 N-linked (GlcNAc...) asparagine glycosylation sites follow: N29 and N33. Residues 51–71 traverse the membrane as a helical segment; that stretch reads SCVFGQVLNVGAMLAVWISVI. The Cytoplasmic portion of the chain corresponds to 72 to 83; sequence RFQQIRDYNCHS. The helical transmembrane segment at 84-104 threads the bilayer; it reads VLNSVSLATGILCALGTSIVG. Topologically, residues 105-115 are extracellular; the sequence is NFQQSNQLQTH. Residues 116-136 traverse the membrane as a helical segment; sequence LAGAFLAFIIGNVYFWMQTAL. The Cytoplasmic portion of the chain corresponds to 137-150; the sequence is TYMVKPKHGGCYIG. The helical transmembrane segment at 151 to 171 threads the bilayer; that stretch reads PIRFCLSIACTALIVAMAVFL. The Extracellular segment spans residues 172–183; it reads KMNMKSVSAICE. Residues 184-204 form a helical membrane-spanning segment; sequence WIVAMILFLLYGLFAVDFWHL. Residues 205–231 are Cytoplasmic-facing; that stretch reads DGHFFHVKKRRTVIPNEMEVSTVTLSI.

Belongs to the DRAM/TMEM150 family.

It is found in the cell membrane. It localises to the endosome membrane. The protein localises to the cytoplasmic vesicle. The protein resides in the autophagosome membrane. In terms of biological role, modulator of macroautophagy that causes accumulation of autophagosomes under basal conditions and enhances autophagic flux. Represses cell death and promotes long-term clonogenic survival of cells grown in the absence of glucose in a macroautophagy-independent manner. May have some role in extracellular matrix engulfment or growth factor receptor recycling, both of which can modulate cell survival. The sequence is that of Modulator of macroautophagy TMEM150B-B from Xenopus laevis (African clawed frog).